The chain runs to 272 residues: Expansin-B16 (272 aa).

The first 25 residues, 1 to 25, serve as a signal peptide directing secretion; that stretch reads MAAFSSSSSAPMLIRSVLFVSLLSA. One can recognise an Expansin-like EG45 domain in the interval 63–173; that stretch reads GGACGYGTLV…RRTACKYGGK (111 aa). 3 cysteine pairs are disulfide-bonded: C66/C95, C98/C168, and C103/C109. Residues 186–267 form the Expansin-like CBD domain; it reads FWLSLLVEFE…NWTPKATYTS (82 aa).

It belongs to the expansin family. Expansin B subfamily.

The protein localises to the secreted. It localises to the cell wall. It is found in the membrane. May cause loosening and extension of plant cell walls by disrupting non-covalent bonding between cellulose microfibrils and matrix glucans. No enzymatic activity has been found. May be required for rapid internodal elongation in deepwater rice during submergence. The chain is Expansin-B16 (EXPB16) from Oryza sativa subsp. japonica (Rice).